Consider the following 43-residue polypeptide: Protein PsbN (43 aa).

A helical transmembrane segment spans residues 5 to 27; that stretch reads TFLSIFISAALLGITGYSIYTAF.

It belongs to the PsbN family.

The protein resides in the plastid. Its subcellular location is the cyanelle thylakoid membrane. Its function is as follows. May play a role in photosystem I and II biogenesis. The chain is Protein PsbN from Cyanophora paradoxa.